A 39-amino-acid polypeptide reads, in one-letter code: Photosystem II reaction center protein J (39 aa).

Residues 9–29 form a helical membrane-spanning segment; sequence LWMVATVGGLAAGGLLILFVF.

It belongs to the PsbJ family. As to quaternary structure, PSII is composed of 1 copy each of membrane proteins PsbA, PsbB, PsbC, PsbD, PsbE, PsbF, PsbH, PsbI, PsbJ, PsbK, PsbL, PsbM, PsbT, PsbX, PsbY, PsbZ, Psb30/Ycf12, at least 3 peripheral proteins of the oxygen-evolving complex and a large number of cofactors. It forms dimeric complexes.

Its subcellular location is the plastid. It localises to the chloroplast thylakoid membrane. In terms of biological role, one of the components of the core complex of photosystem II (PSII). PSII is a light-driven water:plastoquinone oxidoreductase that uses light energy to abstract electrons from H(2)O, generating O(2) and a proton gradient subsequently used for ATP formation. It consists of a core antenna complex that captures photons, and an electron transfer chain that converts photonic excitation into a charge separation. In Emiliania huxleyi (Coccolithophore), this protein is Photosystem II reaction center protein J.